The sequence spans 247 residues: Carboxy-S-adenosyl-L-methionine synthase (247 aa).

S-adenosyl-L-methionine is bound by residues Tyr-39, 64 to 66, 89 to 90, 117 to 118, Asn-132, and Arg-199; these read GCS, DN, and DI.

This sequence belongs to the class I-like SAM-binding methyltransferase superfamily. Cx-SAM synthase family. Homodimer.

It catalyses the reaction prephenate + S-adenosyl-L-methionine = carboxy-S-adenosyl-L-methionine + 3-phenylpyruvate + H2O. Its function is as follows. Catalyzes the conversion of S-adenosyl-L-methionine (SAM) to carboxy-S-adenosyl-L-methionine (Cx-SAM). In Pectobacterium atrosepticum (strain SCRI 1043 / ATCC BAA-672) (Erwinia carotovora subsp. atroseptica), this protein is Carboxy-S-adenosyl-L-methionine synthase.